Here is a 374-residue protein sequence, read N- to C-terminus: Peptide chain release factor 2 (374 aa).

The residue at position 249 (Q249) is an N5-methylglutamine.

This sequence belongs to the prokaryotic/mitochondrial release factor family. In terms of processing, methylated by PrmC. Methylation increases the termination efficiency of RF2.

The protein localises to the cytoplasm. In terms of biological role, peptide chain release factor 2 directs the termination of translation in response to the peptide chain termination codons UGA and UAA. In Ruegeria sp. (strain TM1040) (Silicibacter sp.), this protein is Peptide chain release factor 2.